The chain runs to 590 residues: Aspartate--tRNA ligase (590 aa).

Glu172 is an L-aspartate binding site. Positions 196 to 199 (QLFK) are aspartate. Arg218 serves as a coordination point for L-aspartate. Residues 218 to 220 (RDE) and Gln227 each bind ATP. His449 contributes to the L-aspartate binding site. Glu483 is an ATP binding site. An L-aspartate-binding site is contributed by Arg490. ATP is bound at residue 535–538 (GLDR).

This sequence belongs to the class-II aminoacyl-tRNA synthetase family. Type 1 subfamily. As to quaternary structure, homodimer.

The protein localises to the cytoplasm. The catalysed reaction is tRNA(Asp) + L-aspartate + ATP = L-aspartyl-tRNA(Asp) + AMP + diphosphate. Functionally, catalyzes the attachment of L-aspartate to tRNA(Asp) in a two-step reaction: L-aspartate is first activated by ATP to form Asp-AMP and then transferred to the acceptor end of tRNA(Asp). The chain is Aspartate--tRNA ligase from Mannheimia succiniciproducens (strain KCTC 0769BP / MBEL55E).